The primary structure comprises 444 residues: N-succinylarginine dihydrolase (444 aa).

Substrate is bound by residues 19–28 (SGLSFGNVAS), Asn110, and 137–138 (HR). The active site involves Glu174. A substrate-binding site is contributed by Arg214. Residue His250 is part of the active site. Positions 252 and 362 each coordinate substrate. Catalysis depends on Cys368, which acts as the Nucleophile.

It belongs to the succinylarginine dihydrolase family. Homodimer.

The catalysed reaction is N(2)-succinyl-L-arginine + 2 H2O + 2 H(+) = N(2)-succinyl-L-ornithine + 2 NH4(+) + CO2. Its pathway is amino-acid degradation; L-arginine degradation via AST pathway; L-glutamate and succinate from L-arginine: step 2/5. Catalyzes the hydrolysis of N(2)-succinylarginine into N(2)-succinylornithine, ammonia and CO(2). In Photobacterium profundum (strain SS9), this protein is N-succinylarginine dihydrolase.